Here is a 231-residue protein sequence, read N- to C-terminus: A-type ATP synthase subunit D (231 aa).

This sequence belongs to the V-ATPase D subunit family. As to quaternary structure, has multiple subunits with at least A(3), B(3), C, D, E, F, H, I and proteolipid K(x).

The protein resides in the cell membrane. In terms of biological role, component of the A-type ATP synthase that produces ATP from ADP in the presence of a proton gradient across the membrane. The sequence is that of A-type ATP synthase subunit D from Methanobrevibacter smithii (strain ATCC 35061 / DSM 861 / OCM 144 / PS).